The chain runs to 73 residues: Mitofissin (73 aa).

It belongs to the ?ATG44? family. Homooligomer. Found as homooctamer in solution, but binds to membranes either as a monomer, dimer, or tetramer, not as an octamer.

The protein localises to the mitochondrion intermembrane space. The protein resides in the vacuole. Mitochondrial fission factor that acts directly on lipid membranes to drive mitochondrial fission required for mitophagy. Directly binds to lipid membranes and brings about lipid membrane fragility to facilitate membrane fission and engulfment of mitochondria by the phagophore. The chain is Mitofissin from Saccharomyces cerevisiae (strain ATCC 204508 / S288c) (Baker's yeast).